The chain runs to 308 residues: Putative lipid kinase SH2167 (308 aa).

The region spanning 1-139 (MGQKFNHGVL…YDVMKVNGTY (139 aa)) is the DAGKc domain. ATP-binding positions include Ser44, 74 to 80 (GDGTVNE), and Thr101. Mg(2+)-binding residues include Ser220, Asp223, and Lys225. Glu281 serves as the catalytic Proton acceptor.

This sequence belongs to the diacylglycerol/lipid kinase family. It depends on Mg(2+) as a cofactor.

Its function is as follows. May catalyze the ATP-dependent phosphorylation of lipids other than diacylglycerol (DAG). This Staphylococcus haemolyticus (strain JCSC1435) protein is Putative lipid kinase SH2167.